Consider the following 445-residue polypeptide: C-terminal-binding protein 2 (445 aa).

Arg-22 carries the post-translational modification Asymmetric dimethylarginine. NAD(+) contacts are provided by residues Ser-106, Ile-186–Thr-191, Asp-210, Cys-243–Asn-249, Ala-270–Arg-272, and Asp-296. Arg-272 is an active-site residue. Glu-301 is a catalytic residue. The active-site Proton donor is His-321. His-321–Trp-324 is an NAD(+) binding site. The interval Thr-414–Gln-445 is disordered. Ser-428 is subject to Phosphoserine. Residues Lys-434 to Gln-445 show a composition bias toward basic and acidic residues.

This sequence belongs to the D-isomer specific 2-hydroxyacid dehydrogenase family. In terms of assembly, interacts with the C-terminus of adenovirus E1A protein. Can form homodimers or heterodimers of CTBP1 and CTBP2. Interacts with HIPK2. Interacts with ZNF217, PNN, NRIP1 and WIZ. Interacts with PRDM16; represses white adipose tissue (WAT)-specific genes expression. Interacts with MCRIP1. In terms of tissue distribution, isoform 2 is specifically localized in synaptic ribbon (at protein level).

Its subcellular location is the nucleus. The protein resides in the synapse. In terms of biological role, corepressor targeting diverse transcription regulators. Functions in brown adipose tissue (BAT) differentiation. Isoform 2 probably acts as a scaffold for specialized synapses. This chain is C-terminal-binding protein 2 (CTBP2), found in Bos taurus (Bovine).